The primary structure comprises 25 residues: Glutamine synthetase 2 isozyme (25 aa).

This sequence belongs to the glutamine synthetase family. Homohexamer.

It localises to the plastid. Its subcellular location is the chloroplast. It carries out the reaction L-glutamate + NH4(+) + ATP = L-glutamine + ADP + phosphate + H(+). In terms of biological role, plays a key role in the nitrogen metabolism of microorganisms, animals and plants. In Emiliania huxleyi (Coccolithophore), this protein is Glutamine synthetase 2 isozyme.